Reading from the N-terminus, the 178-residue chain is CDP-archaeol synthase (178 aa).

5 helical membrane passes run 3–23 (LLLL…ANAV), 56–76 (FFGI…VILY), 87–107 (LFGY…GDML), 123–145 (APIL…FYPL), and 150–169 (IVLL…IIAY).

This sequence belongs to the CDP-archaeol synthase family. It depends on Mg(2+) as a cofactor.

The protein resides in the cell membrane. It catalyses the reaction 2,3-bis-O-(geranylgeranyl)-sn-glycerol 1-phosphate + CTP + H(+) = CDP-2,3-bis-O-(geranylgeranyl)-sn-glycerol + diphosphate. It participates in membrane lipid metabolism; glycerophospholipid metabolism. Its function is as follows. Catalyzes the formation of CDP-2,3-bis-(O-geranylgeranyl)-sn-glycerol (CDP-archaeol) from 2,3-bis-(O-geranylgeranyl)-sn-glycerol 1-phosphate (DGGGP) and CTP. This reaction is the third ether-bond-formation step in the biosynthesis of archaeal membrane lipids. In Methanococcus maripaludis (strain C6 / ATCC BAA-1332), this protein is CDP-archaeol synthase.